A 378-amino-acid chain; its full sequence is Protein RecA (378 aa).

ATP is bound at residue Gly79–Thr86.

It belongs to the RecA family.

It is found in the cytoplasm. Can catalyze the hydrolysis of ATP in the presence of single-stranded DNA, the ATP-dependent uptake of single-stranded DNA by duplex DNA, and the ATP-dependent hybridization of homologous single-stranded DNAs. It interacts with LexA causing its activation and leading to its autocatalytic cleavage. This chain is Protein RecA, found in Streptococcus equi subsp. zooepidemicus (strain H70).